The primary structure comprises 108 residues: UPF0102 protein SO_0299 (108 aa).

The protein belongs to the UPF0102 family.

The protein is UPF0102 protein SO_0299 of Shewanella oneidensis (strain ATCC 700550 / JCM 31522 / CIP 106686 / LMG 19005 / NCIMB 14063 / MR-1).